The sequence spans 278 residues: Serine/arginine-rich splicing factor SR34B (278 aa).

In terms of domain architecture, RRM 1 spans 7 to 82; the sequence is RTIYVGNLPG…HHLRVELAHG (76 aa). Positions 81–91 are enriched in basic and acidic residues; the sequence is HGGRRSSHDAR. Disordered regions lie at residues 81–121 and 192–263; these read HGGR…SEYR and EYDS…RSLS. Gly residues predominate over residues 95-107; it reads SGRGRGGRGGGDG. 2 stretches are compositionally biased toward basic and acidic residues: residues 108 to 120 and 192 to 201; these read GGRE…RSEY and EYDSRRDSRS. In terms of domain architecture, RRM 2 spans 120–195; that stretch reads YRVVVSGLPS…EYVRVREYDS (76 aa). Phosphoserine is present on residues S201, S203, S225, S231, S233, S242, S250, S259, and S263. Residues 207 to 243 are compositionally biased toward basic residues; the sequence is SYSKSRSRGRSPSRSRSRSRSRSKSRSPKAKSLRRSP.

Belongs to the splicing factor SR family. SR subfamily. In terms of assembly, component of the spliceosome.

Its subcellular location is the nucleus speckle. It localises to the nucleus. The protein resides in the nucleoplasm. Its function is as follows. Probably involved in intron recognition and spliceosome assembly. The protein is Serine/arginine-rich splicing factor SR34B (SR34B) of Arabidopsis thaliana (Mouse-ear cress).